A 327-amino-acid polypeptide reads, in one-letter code: Aldo/keto reductase slr0942 (327 aa).

18-27 (GEQIPALGLG) contacts NADP(+). The active-site Proton donor is tyrosine 57. Histidine 119 is a binding site for substrate. An NADP(+)-binding site is contributed by 216-280 (SPLGSGDRPA…SVNPERLEQN (65 aa)).

The protein belongs to the aldo/keto reductase family. Monomer.

The enzyme catalyses a secondary alcohol + NADP(+) = a ketone + NADPH + H(+). Its activity is regulated as follows. Curcumin non-competitively inhibits the enzyme with respect to furfural. To a lesser extent, enzyme activity is also inhibited by indomethacin, coumarate, coumarin, and alrestatin. Aldo/keto reductase with broad substrate spectrum. Catalyzes the NADPH-dependent reduction of aldehyde- and ketone-groups of different classes of carbonyl compounds to the corresponding alcohols. Highest enzymatic efficiency is observed with 4-oxonon-2-enal (4-ONE) and 4-hydroxynon-2-enal (4-HNE), that are lipid peroxidation products, and 9,10-phenanthrenequinone (9,10-PQ), a photoproduct of phenanthrene that is one of the most prevalent polycyclic aromatic hydrocarbons in the environment. Is also active on sugar-derived reactive carbonyls such as methylglyoxal (MG), glyoxal and 3-deoxyglucosone (3-DG), and on other lipid-derived carbonyls such as acrolein. May be involved in the detoxification of the toxic lipid peroxidation products 4-ONE and 4-HNE besides many other exo- and endogenic reactive carbonyl compounds (RCs) that may lead to photoinhibition or other cell damages. This is Aldo/keto reductase slr0942 from Synechocystis sp. (strain ATCC 27184 / PCC 6803 / Kazusa).